The primary structure comprises 545 residues: CTP synthase (545 aa).

The segment at 1–266 (MKTNYIFVTG…DDYICKRFSL (266 aa)) is amidoligase domain. Residue Ser-14 participates in CTP binding. A UTP-binding site is contributed by Ser-14. ATP-binding positions include 15–20 (SLGKGI) and Asp-72. Mg(2+)-binding residues include Asp-72 and Glu-140. CTP-binding positions include 147-149 (DIE), 187-192 (KTKPTQ), and Lys-223. UTP contacts are provided by residues 187–192 (KTKPTQ) and Lys-223. 239–241 (KDV) serves as a coordination point for ATP. A Glutamine amidotransferase type-1 domain is found at 291–542 (TIGMVGKYVE…VKAAFDYQKG (252 aa)). Gly-352 is a binding site for L-glutamine. Cys-379 (nucleophile; for glutamine hydrolysis) is an active-site residue. L-glutamine is bound by residues 380–383 (LGMQ), Glu-403, and Arg-470. Catalysis depends on residues His-515 and Glu-517.

The protein belongs to the CTP synthase family. Homotetramer.

The enzyme catalyses UTP + L-glutamine + ATP + H2O = CTP + L-glutamate + ADP + phosphate + 2 H(+). The catalysed reaction is L-glutamine + H2O = L-glutamate + NH4(+). It carries out the reaction UTP + NH4(+) + ATP = CTP + ADP + phosphate + 2 H(+). Its pathway is pyrimidine metabolism; CTP biosynthesis via de novo pathway; CTP from UDP: step 2/2. Its activity is regulated as follows. Allosterically activated by GTP, when glutamine is the substrate; GTP has no effect on the reaction when ammonia is the substrate. The allosteric effector GTP functions by stabilizing the protein conformation that binds the tetrahedral intermediate(s) formed during glutamine hydrolysis. Inhibited by the product CTP, via allosteric rather than competitive inhibition. In terms of biological role, catalyzes the ATP-dependent amination of UTP to CTP with either L-glutamine or ammonia as the source of nitrogen. Regulates intracellular CTP levels through interactions with the four ribonucleotide triphosphates. The polypeptide is CTP synthase (Proteus mirabilis (strain HI4320)).